A 219-amino-acid polypeptide reads, in one-letter code: Probable GTP-binding protein EngB (219 aa).

Residues 31-205 (VGVEIAFAGR…LSILNEWCHP (175 aa)) form the EngB-type G domain. GTP contacts are provided by residues 39–46 (GRSNAGKS), 66–70 (GRTQL), 84–87 (DLPG), 151–154 (TKSD), and 184–186 (FSA). Residues serine 46 and threonine 68 each coordinate Mg(2+).

Belongs to the TRAFAC class TrmE-Era-EngA-EngB-Septin-like GTPase superfamily. EngB GTPase family. The cofactor is Mg(2+).

Functionally, necessary for normal cell division and for the maintenance of normal septation. The chain is Probable GTP-binding protein EngB from Shewanella sp. (strain MR-7).